The following is a 120-amino-acid chain: NAD(P)H-quinone oxidoreductase subunit 3, chloroplastic (120 aa).

A run of 3 helical transmembrane segments spans residues 9 to 29 (IFWA…FISG), 64 to 84 (MFAL…PWAM), and 88 to 108 (VLGV…IVGL).

It belongs to the complex I subunit 3 family. NDH is composed of at least 16 different subunits, 5 of which are encoded in the nucleus.

Its subcellular location is the plastid. The protein resides in the chloroplast thylakoid membrane. It catalyses the reaction a plastoquinone + NADH + (n+1) H(+)(in) = a plastoquinol + NAD(+) + n H(+)(out). The enzyme catalyses a plastoquinone + NADPH + (n+1) H(+)(in) = a plastoquinol + NADP(+) + n H(+)(out). NDH shuttles electrons from NAD(P)H:plastoquinone, via FMN and iron-sulfur (Fe-S) centers, to quinones in the photosynthetic chain and possibly in a chloroplast respiratory chain. The immediate electron acceptor for the enzyme in this species is believed to be plastoquinone. Couples the redox reaction to proton translocation, and thus conserves the redox energy in a proton gradient. The chain is NAD(P)H-quinone oxidoreductase subunit 3, chloroplastic from Guizotia abyssinica (Niger).